We begin with the raw amino-acid sequence, 564 residues long: Ferric reductase transmembrane component 1 (564 aa).

The N-linked (GlcNAc...) asparagine glycan is linked to asparagine 4. The next 2 helical transmembrane spans lie at 10–30 and 73–93; these read TVIA…MFWL and VILT…FIGM. Asparagine 111 is a glycosylation site (N-linked (GlcNAc...) asparagine). A helical transmembrane segment spans residues 117 to 137; the sequence is VAARLGFLACGLYVTSYFFSI. The Ferric oxidoreductase domain maps to 121 to 254; it reads LGFLACGLYV…VYMKVCVAVY (134 aa). 2 residues coordinate heme: histidine 157 and histidine 171. 2 consecutive transmembrane segments (helical) span residues 160 to 180 and 193 to 213; these read LSQY…GLAA and IIGY…LPFF. Residues histidine 225 and histidine 239 each contribute to the heme site. One can recognise an FAD-binding FR-type domain in the interval 255-410; sequence VFDRGCRMLR…DGPYGPVSNP (156 aa). Residue asparagine 268 is glycosylated (N-linked (GlcNAc...) asparagine). 317–323 is a binding site for FAD; it reads HPFTIAS. Residue asparagine 360 is glycosylated (N-linked (GlcNAc...) asparagine). 3 positions are modified to phosphoserine: serine 362, serine 381, and serine 383. A helical membrane pass occupies residues 417–437; the sequence is LFLFAGGVGVSYILPIILDTI. 419–427 lines the NAD(+) pocket; the sequence is LFAGGVGVS. Asparagine 501 carries an N-linked (GlcNAc...) asparagine glycan.

This sequence belongs to the ferric reductase (FRE) family. The cofactor is FAD. Heme is required as a cofactor.

It is found in the cell membrane. The catalysed reaction is 2 a Fe(II)-siderophore + NADP(+) + H(+) = 2 a Fe(III)-siderophore + NADPH. Metalloreductase responsible for reducing extracellular iron and copper prior to import. Catalyzes the reductive uptake of Fe(3+)-salts and Fe(3+) bound to catecholate or hydroxamate siderophores. Fe(3+) is reduced to Fe(2+), which then dissociates from the siderophore and can be imported by the high-affinity Fe(2+) transport complex in the plasma membrane. Also participates in Cu(2+) reduction and Cu(+) uptake. This Schizosaccharomyces pombe (strain 972 / ATCC 24843) (Fission yeast) protein is Ferric reductase transmembrane component 1 (frp1).